Here is a 107-residue protein sequence, read N- to C-terminus: C-X-C motif chemokine 2 (107 aa).

An N-terminal signal peptide occupies residues M1 to G34. Cystine bridges form between C43-C69 and C45-C85.

It belongs to the intercrine alpha (chemokine CxC) family. The N-terminal processed form GRO-beta(5-73) is produced by proteolytic cleavage after secretion from bone marrow stromal cells.

The protein localises to the secreted. Its function is as follows. Produced by activated monocytes and neutrophils and expressed at sites of inflammation. Hematoregulatory chemokine, which, in vitro, suppresses hematopoietic progenitor cell proliferation. GRO-beta(5-73) shows a highly enhanced hematopoietic activity. This chain is C-X-C motif chemokine 2 (CXCL2), found in Homo sapiens (Human).